An 81-amino-acid chain; its full sequence is Keratin-associated protein 19-3 (81 aa).

This sequence belongs to the KRTAP type 19 family. In terms of assembly, interacts with hair keratins.

In terms of biological role, in the hair cortex, hair keratin intermediate filaments are embedded in an interfilamentous matrix, consisting of hair keratin-associated proteins (KRTAP), which are essential for the formation of a rigid and resistant hair shaft through their extensive disulfide bond cross-linking with abundant cysteine residues of hair keratins. The matrix proteins include the high-sulfur and high-glycine-tyrosine keratins. In Homo sapiens (Human), this protein is Keratin-associated protein 19-3 (KRTAP19-3).